Consider the following 368-residue polypeptide: 1-deoxy-D-xylulose 5-phosphate reductoisomerase (368 aa).

6 residues coordinate NADPH: T10, G11, S12, I13, Q38, and N100. A 1-deoxy-D-xylulose 5-phosphate-binding site is contributed by K101. An NADPH-binding site is contributed by E102. D125 lines the Mn(2+) pocket. Residues S126, E127, S151, and H172 each contribute to the 1-deoxy-D-xylulose 5-phosphate site. E127 is a Mn(2+) binding site. Position 178 (G178) interacts with NADPH. 1-deoxy-D-xylulose 5-phosphate is bound by residues S185, N190, K191, and E194. E194 is a binding site for Mn(2+).

Belongs to the DXR family. The cofactor is Mg(2+). It depends on Mn(2+) as a cofactor.

The catalysed reaction is 2-C-methyl-D-erythritol 4-phosphate + NADP(+) = 1-deoxy-D-xylulose 5-phosphate + NADPH + H(+). It functions in the pathway isoprenoid biosynthesis; isopentenyl diphosphate biosynthesis via DXP pathway; isopentenyl diphosphate from 1-deoxy-D-xylulose 5-phosphate: step 1/6. Functionally, catalyzes the NADPH-dependent rearrangement and reduction of 1-deoxy-D-xylulose-5-phosphate (DXP) to 2-C-methyl-D-erythritol 4-phosphate (MEP). The sequence is that of 1-deoxy-D-xylulose 5-phosphate reductoisomerase from Tropheryma whipplei (strain Twist) (Whipple's bacillus).